Reading from the N-terminus, the 259-residue chain is Deoxyribose-phosphate aldolase (259 aa).

Catalysis depends on aspartate 102, which acts as the Proton donor/acceptor. Lysine 167 functions as the Schiff-base intermediate with acetaldehyde in the catalytic mechanism. Lysine 201 acts as the Proton donor/acceptor in catalysis.

This sequence belongs to the DeoC/FbaB aldolase family. DeoC type 2 subfamily.

The protein localises to the cytoplasm. It catalyses the reaction 2-deoxy-D-ribose 5-phosphate = D-glyceraldehyde 3-phosphate + acetaldehyde. It functions in the pathway carbohydrate degradation; 2-deoxy-D-ribose 1-phosphate degradation; D-glyceraldehyde 3-phosphate and acetaldehyde from 2-deoxy-alpha-D-ribose 1-phosphate: step 2/2. Catalyzes a reversible aldol reaction between acetaldehyde and D-glyceraldehyde 3-phosphate to generate 2-deoxy-D-ribose 5-phosphate. In Salmonella typhi, this protein is Deoxyribose-phosphate aldolase.